We begin with the raw amino-acid sequence, 236 residues long: Leucyl/phenylalanyl-tRNA--protein transferase (236 aa).

It belongs to the L/F-transferase family.

It is found in the cytoplasm. It carries out the reaction N-terminal L-lysyl-[protein] + L-leucyl-tRNA(Leu) = N-terminal L-leucyl-L-lysyl-[protein] + tRNA(Leu) + H(+). The catalysed reaction is N-terminal L-arginyl-[protein] + L-leucyl-tRNA(Leu) = N-terminal L-leucyl-L-arginyl-[protein] + tRNA(Leu) + H(+). It catalyses the reaction L-phenylalanyl-tRNA(Phe) + an N-terminal L-alpha-aminoacyl-[protein] = an N-terminal L-phenylalanyl-L-alpha-aminoacyl-[protein] + tRNA(Phe). In terms of biological role, functions in the N-end rule pathway of protein degradation where it conjugates Leu, Phe and, less efficiently, Met from aminoacyl-tRNAs to the N-termini of proteins containing an N-terminal arginine or lysine. This Aliivibrio salmonicida (strain LFI1238) (Vibrio salmonicida (strain LFI1238)) protein is Leucyl/phenylalanyl-tRNA--protein transferase.